Reading from the N-terminus, the 492-residue chain is Protein adenylyltransferase Fic (492 aa).

Residues 1–18 (MGTEAEQPSPPAQQQDQE) are compositionally biased toward low complexity. The disordered stretch occupies residues 1-26 (MGTEAEQPSPPAQQQDQENPPLCKAQ). Residues 33 to 55 (LYRFVLIFVAGSLAAWTFHALSS) traverse the membrane as a helical segment. TPR repeat units lie at residues 118 to 151 (ALGA…APRH) and 152 to 186 (PEVL…SPSN). The Inhibitory (S/T)XXXE(G/N) motif motif lies at 243–248 (SVGIEG). Residues Glu-247 and 328–331 (VGGH) each bind ATP. The region spanning 297-432 (ITIKDILELH…IRPFVRFIAD (136 aa)) is the Fido domain. His-375 is an active-site residue. Residues 379-386 (DGNGRTSR), 411-412 (YY), and Asn-419 contribute to the ATP site.

The protein belongs to the fic family. Homodimer; homodimerization may regulate adenylyltransferase and phosphodiesterase activities.

The protein resides in the membrane. It carries out the reaction L-tyrosyl-[protein] + ATP = O-(5'-adenylyl)-L-tyrosyl-[protein] + diphosphate. The enzyme catalyses L-threonyl-[protein] + ATP = 3-O-(5'-adenylyl)-L-threonyl-[protein] + diphosphate. It catalyses the reaction 3-O-(5'-adenylyl)-L-threonyl-[protein] + H2O = L-threonyl-[protein] + AMP + H(+). With respect to regulation, the side chain of Glu-247 determines which of the two opposing activities (AMPylase or de-AMPylase) will take place. In response to endoplasmic reticulum stress, mediates de-AMPylase activity. Adenylyltransferase activity is inhibited by the inhibitory helix present at the N-terminus: Glu-247 binds ATP and competes with ATP-binding at Arg-386, thereby preventing adenylyltransferase activity. In unstressed cells, disengagement of Glu-247 promotes adenylyltransferase activity. Activation dissociates ATP-binding from Glu-247, allowing ordered binding of the entire ATP moiety with the alpha-phosphate in an orientation that is productive for accepting an incoming target hydroxyl side chain. Protein that can both mediate the addition of adenosine 5'-monophosphate (AMP) to specific residues of target proteins (AMPylation), and the removal of the same modification from target proteins (de-AMPylation), depending on the context. The side chain of Glu-247 determines which of the two opposing activities (AMPylase or de-AMPylase) will take place. Acts as a key regulator of the unfolded protein response (UPR) by mediating AMPylation or de-AMPylation of Hsc70-3/BiP. In unstressed cells, acts as an adenylyltransferase by mediating AMPylation of Hsc70-3/BiP at 'Thr-518', thereby inactivating it. In response to endoplasmic reticulum stress, acts as a phosphodiesterase by mediating removal of ATP (de-AMPylation) from Hsc70-3/BiP at 'Thr-518', leading to restore HSPA5/BiP activity. In Drosophila melanogaster (Fruit fly), this protein is Protein adenylyltransferase Fic.